A 169-amino-acid polypeptide reads, in one-letter code: Ribosome maturation factor RimP (169 aa).

Belongs to the RimP family.

The protein resides in the cytoplasm. In terms of biological role, required for maturation of 30S ribosomal subunits. The polypeptide is Ribosome maturation factor RimP (Coprothermobacter proteolyticus (strain ATCC 35245 / DSM 5265 / OCM 4 / BT)).